The chain runs to 31 residues: Cytochrome b6-f complex subunit 6 (31 aa).

A helical transmembrane segment spans residues 4–26; that stretch reads LTSYFGFLLAALTITSALFIGLN.

It belongs to the PetL family. The 4 large subunits of the cytochrome b6-f complex are cytochrome b6, subunit IV (17 kDa polypeptide, PetD), cytochrome f and the Rieske protein, while the 4 small subunits are PetG, PetL, PetM and PetN. The complex functions as a dimer.

The protein resides in the plastid. It localises to the chloroplast thylakoid membrane. Component of the cytochrome b6-f complex, which mediates electron transfer between photosystem II (PSII) and photosystem I (PSI), cyclic electron flow around PSI, and state transitions. PetL is important for photoautotrophic growth as well as for electron transfer efficiency and stability of the cytochrome b6-f complex. The chain is Cytochrome b6-f complex subunit 6 from Amaranthus caudatus (Love-lies-bleeding).